A 375-amino-acid chain; its full sequence is Fructose-1,6-bisphosphate aldolase/phosphatase (375 aa).

Aspartate 15 functions as the Proton acceptor; for FBP phosphatase activity in the catalytic mechanism. Mg(2+) contacts are provided by aspartate 15, histidine 22, aspartate 56, and aspartate 57. Histidine 22 contacts beta-D-fructose 1,6-bisphosphate. Residue histidine 22 coordinates dihydroxyacetone phosphate. Tyrosine 94 provides a ligand contact to beta-D-fructose 1,6-bisphosphate. Glutamine 98 contacts Mg(2+). Position 107–108 (107–108 (GN)) interacts with beta-D-fructose 1,6-bisphosphate. Aspartate 135 contacts Mg(2+). Lysine 136 serves as a coordination point for beta-D-fructose 1,6-bisphosphate. Lysine 136 is a dihydroxyacetone phosphate binding site. The active-site Proton donor/acceptor; for FBP aldolase activity is tyrosine 237. Lysine 240, aspartate 241, and aspartate 242 together coordinate Mg(2+). The active-site Schiff-base intermediate with DHAP; for FBP aldolase activity is lysine 240. Beta-D-fructose 1,6-bisphosphate-binding positions include 250-251 (QS), arginine 274, aspartate 295, and tyrosine 357. Arginine 274 and aspartate 295 together coordinate dihydroxyacetone phosphate.

Belongs to the FBP aldolase/phosphatase family. As to quaternary structure, homooctamer; dimer of tetramers. Requires Mg(2+) as cofactor.

The enzyme catalyses beta-D-fructose 1,6-bisphosphate = D-glyceraldehyde 3-phosphate + dihydroxyacetone phosphate. The catalysed reaction is beta-D-fructose 1,6-bisphosphate + H2O = beta-D-fructose 6-phosphate + phosphate. It functions in the pathway carbohydrate biosynthesis; gluconeogenesis. Its activity is regulated as follows. FBPase activity is inhibited by Ca(2+), ATP, ADP and phosphoenolpyruvate. Catalyzes two subsequent steps in gluconeogenesis: the aldol condensation of dihydroxyacetone phosphate (DHAP) and glyceraldehyde-3-phosphate (GA3P) to fructose-1,6-bisphosphate (FBP), and the dephosphorylation of FBP to fructose-6-phosphate (F6P). Can also dephosphorylate, with lower activity, other related substrates including fructose-1-phosphate, fructose-6-phosphate, glucose-1-phosphate, glucose-6-phosphate, glycerol-2-phosphate, phosphoenolpyruvate, 5'-AMP, 6'-ADP and 7'-ATP. The sequence is that of Fructose-1,6-bisphosphate aldolase/phosphatase from Thermococcus onnurineus (strain NA1).